The sequence spans 491 residues: UDP-N-acetylmuramate--L-alanine ligase (491 aa).

Gly-126–Thr-132 is an ATP binding site.

This sequence belongs to the MurCDEF family.

The protein resides in the cytoplasm. The enzyme catalyses UDP-N-acetyl-alpha-D-muramate + L-alanine + ATP = UDP-N-acetyl-alpha-D-muramoyl-L-alanine + ADP + phosphate + H(+). It participates in cell wall biogenesis; peptidoglycan biosynthesis. In terms of biological role, cell wall formation. This chain is UDP-N-acetylmuramate--L-alanine ligase, found in Escherichia coli (strain SMS-3-5 / SECEC).